The following is a 352-amino-acid chain: Pyrimidine monooxygenase RutA (352 aa).

Residues 49–50 (IK), asparagine 115, glutamate 124, 140–141 (RY), and serine 189 each bind FMN.

The protein belongs to the NtaA/SnaA/DszA monooxygenase family. RutA subfamily.

It carries out the reaction uracil + FMNH2 + NADH + O2 = (Z)-3-ureidoacrylate + FMN + NAD(+) + H2O + H(+). The catalysed reaction is thymine + FMNH2 + NADH + O2 = (Z)-2-methylureidoacrylate + FMN + NAD(+) + H2O + H(+). Its function is as follows. Catalyzes the pyrimidine ring opening between N-3 and C-4 by an unusual flavin hydroperoxide-catalyzed mechanism, adding oxygen atoms in the process to yield ureidoacrylate peracid, that immediately reacts with FMN forming ureidoacrylate and FMN-N(5)-oxide. The FMN-N(5)-oxide reacts spontaneously with NADH to produce FMN. Requires the flavin reductase RutF to regenerate FMN in vivo. The polypeptide is Pyrimidine monooxygenase RutA (Caulobacter segnis (strain ATCC 21756 / DSM 7131 / JCM 7823 / NBRC 15250 / LMG 17158 / TK0059) (Mycoplana segnis)).